A 1353-amino-acid polypeptide reads, in one-letter code: Patatin-like phospholipase domain-containing protein ZK370.4 (1353 aa).

Residues 12 to 32 (IFLVTFIYNHVLLILFTVCII) form a helical membrane-spanning segment. Residues 49–64 (TPSSASSSATPSSRNS) are compositionally biased toward low complexity. 2 disordered regions span residues 49–188 (TPSS…STAF) and 199–218 (SRSYFRQNQENNKDTRVRPP). The span at 91 to 123 (SPKSGTPTNTQTIEPPTSLNLNMVNSASGSNLS) shows a compositional bias: polar residues. 2 stretches are compositionally biased toward basic residues: residues 126 to 138 (RRMRKRDWAKKLY) and 170 to 184 (PRRRSKHGNSSRRRQ). A nucleoside 3',5'-cyclic phosphate contacts are provided by residues 245–372 (LKML…VITR), 444–581 (FGLV…VLRR), and 570–692 (IYLP…LGQY). Residues 942-1108 (LVLGGGGARG…VNNVPADVMR (167 aa)) form the PNPLA domain. The GXGXXG signature appears at 946-951 (GGGARG). Residues 973-977 (GTSIG) carry the GXSXG motif. The active-site Nucleophile is S975. The active-site Proton acceptor is D1095. A DGA/G motif is present at residues 1095–1097 (DGG). 3 disordered regions span residues 1230–1249 (EKETRKFKRQQSRREKPDVS), 1274–1293 (SMSLNPSANGPVGRAGDHFL), and 1305–1353 (YEEE…PPSS). Residues 1328–1337 (GPPSSSSSGG) show a composition bias toward low complexity.

Belongs to the NTE family.

The protein resides in the membrane. In Caenorhabditis elegans, this protein is Patatin-like phospholipase domain-containing protein ZK370.4.